Consider the following 191-residue polypeptide: Elongation factor P-like protein (191 aa).

It belongs to the elongation factor P family.

The polypeptide is Elongation factor P-like protein (Photobacterium profundum (strain SS9)).